We begin with the raw amino-acid sequence, 59 residues long: Putative movement protein p6.6 (59 aa).

The helical transmembrane segment at 13 to 35 threads the bilayer; it reads RVGPLLVLCLLLLLILFSRSWNV.

The protein localises to the membrane. In terms of biological role, cell-to-cell movement. The chain is Putative movement protein p6.6 from Panicum mosaic virus (strain United States/Kansas 109S) (PMV).